A 209-amino-acid polypeptide reads, in one-letter code: MGKIEVINHPLIQHKLSILRRTDTSTKAFRELVDEIAMLMGYEVLRDLPLEDVEIETPITKTVQKQLAGKKLAIVPILRAGIGMVDGLLSLVPAAKVGHIGMYRDEETLQPVEYLVKLPEDIDQRQIFVVDPMLATGGSAILAVDSLKKRGASNIKFVCLVSAPEGVKALQEAHPDVEIFTAALDERLNEHGYIVPGLGDAGDRLFGTK.

5-phospho-alpha-D-ribose 1-diphosphate-binding positions include Arg79, Arg104, and 131–139 (DPMLATGGS). Uracil is bound by residues Ile194 and 199–201 (GDA). Residue Asp200 participates in 5-phospho-alpha-D-ribose 1-diphosphate binding.

This sequence belongs to the UPRTase family. It depends on Mg(2+) as a cofactor.

It carries out the reaction UMP + diphosphate = 5-phospho-alpha-D-ribose 1-diphosphate + uracil. It functions in the pathway pyrimidine metabolism; UMP biosynthesis via salvage pathway; UMP from uracil: step 1/1. Its activity is regulated as follows. Allosterically activated by GTP. Catalyzes the conversion of uracil and 5-phospho-alpha-D-ribose 1-diphosphate (PRPP) to UMP and diphosphate. The protein is Uracil phosphoribosyltransferase of Streptococcus pneumoniae (strain ATCC BAA-255 / R6).